The primary structure comprises 84 residues: uncharacterized protein (84 aa).

This is an uncharacterized protein from Schizosaccharomyces pombe (strain 972 / ATCC 24843) (Fission yeast).